The following is a 370-amino-acid chain: Anhydro-N-acetylmuramic acid kinase (370 aa).

Residue 13 to 20 (GTSMDGVD) participates in ATP binding.

This sequence belongs to the anhydro-N-acetylmuramic acid kinase family.

The catalysed reaction is 1,6-anhydro-N-acetyl-beta-muramate + ATP + H2O = N-acetyl-D-muramate 6-phosphate + ADP + H(+). It participates in amino-sugar metabolism; 1,6-anhydro-N-acetylmuramate degradation. The protein operates within cell wall biogenesis; peptidoglycan recycling. Catalyzes the specific phosphorylation of 1,6-anhydro-N-acetylmuramic acid (anhMurNAc) with the simultaneous cleavage of the 1,6-anhydro ring, generating MurNAc-6-P. Is required for the utilization of anhMurNAc either imported from the medium or derived from its own cell wall murein, and thus plays a role in cell wall recycling. This Shewanella denitrificans (strain OS217 / ATCC BAA-1090 / DSM 15013) protein is Anhydro-N-acetylmuramic acid kinase.